Consider the following 103-residue polypeptide: Small ribosomal subunit protein bS6c (103 aa).

It belongs to the bacterial ribosomal protein bS6 family.

The protein localises to the plastid. Its subcellular location is the chloroplast. Its function is as follows. Binds together with bS18 to 16S ribosomal RNA. This Cyanidium caldarium (Red alga) protein is Small ribosomal subunit protein bS6c (rps6).